The primary structure comprises 382 residues: MDMDSAHLDSSLLTLAFRLIKAAQTAAPSVLADLLAEGAPAWFQDDDLGWSCLHYAAERKEPECLEVLLQGGAVWNAVDKWGRTAGEICLSLGDEEGWSIIRNEGIRSEMLHHALSGTSSPDATNNIVLRAEDKTSAGDNLVFLKSKLTWDVGKDGKERVLDADGNGVMMGWEEPLMVEHVKRLTEEHPKAELGAEGMSILNVGFGLGIVDRLFQECDPKPSHHTIIEAHPQVLEYIHKKGVHLLPNVRILQGRWQDWLLDGEKVGDVLSGTPDGMGFDAIFVDTFAEGYEDLKAFFEVIPDILNADNGRFSFWNGLGATNPTIYAVSSSLAELHLEDVGLQVEWHDVLIPESMREEVWKGVRRRYWDLPGYRLPIAKMSLI.

2 ANK repeats span residues 22 to 46 (AAQT…FQDD) and 48 to 80 (LGWS…AVDK). The RMT2 domain maps to 134-382 (KTSAGDNLVF…RLPIAKMSLI (249 aa)). Residues Phe-143, Met-177, 205-210 (FGLGIV), 228-230 (EAH), 255-256 (WQ), and Asp-284 contribute to the S-adenosyl-L-methionine site.

This sequence belongs to the class I-like SAM-binding methyltransferase superfamily. RMT2 methyltransferase family. As to quaternary structure, monomer.

It localises to the cytoplasm. It is found in the nucleus. S-adenosyl-L-methionine-dependent protein-arginine N-methyltransferase that methylates the delta-nitrogen atom of arginine residues to form N5-methylarginine (type IV) in target proteins. Monomethylates ribosomal protein L12. The protein is Protein arginine N-methyltransferase 2 of Cryptococcus neoformans var. neoformans serotype D (strain JEC21 / ATCC MYA-565) (Filobasidiella neoformans).